The sequence spans 468 residues: Probable citrate synthase, mitochondrial (468 aa).

Active-site residues include His-303, His-349, and Asp-404.

Belongs to the citrate synthase family. In terms of assembly, homodimer.

It localises to the mitochondrion matrix. It catalyses the reaction oxaloacetate + acetyl-CoA + H2O = citrate + CoA + H(+). It functions in the pathway carbohydrate metabolism; tricarboxylic acid cycle; isocitrate from oxaloacetate: step 1/2. The sequence is that of Probable citrate synthase, mitochondrial (cts-1) from Caenorhabditis elegans.